The sequence spans 196 residues: GTP cyclohydrolase-2 (196 aa).

GTP is bound at residue 49–53 (RIHSE). Zn(2+) is bound by residues C54, C65, and C67. Residues Q70, 92-94 (EGR), and T114 contribute to the GTP site. D126 (proton acceptor) is an active-site residue. Catalysis depends on R128, which acts as the Nucleophile. GTP contacts are provided by T149 and K154.

Belongs to the GTP cyclohydrolase II family. Homodimer. Zn(2+) is required as a cofactor.

It catalyses the reaction GTP + 4 H2O = 2,5-diamino-6-hydroxy-4-(5-phosphoribosylamino)-pyrimidine + formate + 2 phosphate + 3 H(+). Its pathway is cofactor biosynthesis; riboflavin biosynthesis; 5-amino-6-(D-ribitylamino)uracil from GTP: step 1/4. In terms of biological role, catalyzes the conversion of GTP to 2,5-diamino-6-ribosylamino-4(3H)-pyrimidinone 5'-phosphate (DARP), formate and pyrophosphate. The chain is GTP cyclohydrolase-2 from Buchnera aphidicola subsp. Schizaphis graminum (strain Sg).